We begin with the raw amino-acid sequence, 274 residues long: Large ribosomal subunit protein uL2cz/uL2cy (274 aa).

Disordered regions lie at residues 1–25 (MAIHLYKTSTPSTRNGAVDSQVKSN) and 224–274 (NPVD…RRSK).

Belongs to the universal ribosomal protein uL2 family. As to quaternary structure, part of the 50S ribosomal subunit.

The protein localises to the plastid. It is found in the chloroplast. The chain is Large ribosomal subunit protein uL2cz/uL2cy (rpl2-A) from Cucumis sativus (Cucumber).